The following is a 141-amino-acid chain: S-adenosylmethionine decarboxylase proenzyme (141 aa).

Serine 63 serves as the catalytic Schiff-base intermediate with substrate; via pyruvic acid. Serine 63 bears the Pyruvic acid (Ser); by autocatalysis mark. Residue histidine 68 is the Proton acceptor; for processing activity of the active site. Catalysis depends on cysteine 83, which acts as the Proton donor; for catalytic activity.

It belongs to the prokaryotic AdoMetDC family. Type 1 subfamily. In terms of assembly, heterotetramer of two alpha and two beta chains arranged as a dimer of alpha/beta heterodimers. Pyruvate serves as cofactor. Post-translationally, is synthesized initially as an inactive proenzyme. Formation of the active enzyme involves a self-maturation process in which the active site pyruvoyl group is generated from an internal serine residue via an autocatalytic post-translational modification. Two non-identical subunits are generated from the proenzyme in this reaction, and the pyruvate is formed at the N-terminus of the alpha chain, which is derived from the carboxyl end of the proenzyme. The post-translation cleavage follows an unusual pathway, termed non-hydrolytic serinolysis, in which the side chain hydroxyl group of the serine supplies its oxygen atom to form the C-terminus of the beta chain, while the remainder of the serine residue undergoes an oxidative deamination to produce ammonia and the pyruvoyl group blocking the N-terminus of the alpha chain.

It carries out the reaction S-adenosyl-L-methionine + H(+) = S-adenosyl 3-(methylsulfanyl)propylamine + CO2. It participates in amine and polyamine biosynthesis; S-adenosylmethioninamine biosynthesis; S-adenosylmethioninamine from S-adenosyl-L-methionine: step 1/1. Catalyzes the decarboxylation of S-adenosylmethionine to S-adenosylmethioninamine (dcAdoMet), the propylamine donor required for the synthesis of the polyamines spermine and spermidine from the diamine putrescine. This is S-adenosylmethionine decarboxylase proenzyme from Thermococcus onnurineus (strain NA1).